Consider the following 38-residue polypeptide: Photosystem II reaction center protein X (38 aa).

A helical membrane pass occupies residues 9 to 29 (ISSLTAGGLVVLTIAVALIVI).

Belongs to the PsbX family. Type 1 subfamily. PSII is composed of 1 copy each of membrane proteins PsbA, PsbB, PsbC, PsbD, PsbE, PsbF, PsbH, PsbI, PsbJ, PsbK, PsbL, PsbM, PsbT, PsbX, PsbY, PsbZ, Psb30/Ycf12, at least 3 peripheral proteins of the oxygen-evolving complex and a large number of cofactors. It forms dimeric complexes.

The protein resides in the plastid. Its subcellular location is the chloroplast thylakoid membrane. Its function is as follows. Involved in the binding and/or turnover of quinones at the Q(B) site of photosystem II (PSII). PSII is a light-driven water plastoquinone oxidoreductase, using light energy to abstract electrons from H(2)O, generating a proton gradient subsequently used for ATP formation. This Trieres chinensis (Marine centric diatom) protein is Photosystem II reaction center protein X.